A 490-amino-acid polypeptide reads, in one-letter code: Bifunctional protein HldE (490 aa).

The tract at residues 1–330 (MERKEIESLF…AEIGHAHPDS (330 aa)) is ribokinase. Residue 205-208 (NRKE) coordinates ATP. Residue Asp-275 is part of the active site. The interval 356-490 (FTNGCFDLLH…EKIRTGSIKE (135 aa)) is cytidylyltransferase.

In the N-terminal section; belongs to the carbohydrate kinase PfkB family. The protein in the C-terminal section; belongs to the cytidylyltransferase family. As to quaternary structure, homodimer.

The enzyme catalyses D-glycero-beta-D-manno-heptose 7-phosphate + ATP = D-glycero-beta-D-manno-heptose 1,7-bisphosphate + ADP + H(+). It carries out the reaction D-glycero-beta-D-manno-heptose 1-phosphate + ATP + H(+) = ADP-D-glycero-beta-D-manno-heptose + diphosphate. It participates in nucleotide-sugar biosynthesis; ADP-L-glycero-beta-D-manno-heptose biosynthesis; ADP-L-glycero-beta-D-manno-heptose from D-glycero-beta-D-manno-heptose 7-phosphate: step 1/4. Its pathway is nucleotide-sugar biosynthesis; ADP-L-glycero-beta-D-manno-heptose biosynthesis; ADP-L-glycero-beta-D-manno-heptose from D-glycero-beta-D-manno-heptose 7-phosphate: step 3/4. In terms of biological role, catalyzes the phosphorylation of D-glycero-D-manno-heptose 7-phosphate at the C-1 position to selectively form D-glycero-beta-D-manno-heptose-1,7-bisphosphate. Catalyzes the ADP transfer from ATP to D-glycero-beta-D-manno-heptose 1-phosphate, yielding ADP-D-glycero-beta-D-manno-heptose. The sequence is that of Bifunctional protein HldE from Geotalea uraniireducens (strain Rf4) (Geobacter uraniireducens).